A 285-amino-acid chain; its full sequence is Polyamine aminopropyltransferase (285 aa).

In terms of domain architecture, PABS spans 5-241; the sequence is DTWFTEHFQT…GWWSVTLSSK (237 aa). Residue Gln-35 coordinates S-methyl-5'-thioadenosine. Residues His-66 and Asp-90 each contribute to the spermidine site. Residues Asp-110 and 141 to 142 contribute to the S-methyl-5'-thioadenosine site; that span reads DG. Asp-160 serves as the catalytic Proton acceptor. 160 to 163 contacts spermidine; sequence DSTD. Position 167 (Pro-167) interacts with S-methyl-5'-thioadenosine.

It belongs to the spermidine/spermine synthase family. As to quaternary structure, homodimer or homotetramer.

It localises to the cytoplasm. It catalyses the reaction S-adenosyl 3-(methylsulfanyl)propylamine + putrescine = S-methyl-5'-thioadenosine + spermidine + H(+). The protein operates within amine and polyamine biosynthesis; spermidine biosynthesis; spermidine from putrescine: step 1/1. Catalyzes the irreversible transfer of a propylamine group from the amino donor S-adenosylmethioninamine (decarboxy-AdoMet) to putrescine (1,4-diaminobutane) to yield spermidine. This chain is Polyamine aminopropyltransferase, found in Xylella fastidiosa (strain Temecula1 / ATCC 700964).